The sequence spans 1097 residues: MCPSEMGTLWYLWSPVLISLAALFSKVTEGRGILESIQRFSLLPTYLPVTYHINNADVSFFLKEANQDIMRNSSLQSRVESFLIYKSRRLPVLNASYGPFSLEQVVPQDLMLPSNPFGFTNTFSLNWRLKAYILQEKVYLSHPKVQVLFHIVGRDWDDHRDENLPCLRVFAFRETQEVRGSCRLGGALGLCVAQLEMLPGWFSPPSVVSGRRRPTEQPEGSPVELYYAVQPGDERGDCAKEDSRKSGGAPAGHNDVDESSPPLHRIGSVFLRETPSSPPLRELRLDSNVAVHYIPKTVRQGDVLTFPISVSRNCTEDRFTLRAKVKKGVSIVGVRASTSSLWDVKQSTEYTGKYAPAVIICQKKSAGSGKSVDDASYEVMKIDIEVEAPSDPPTTQLVTWQVEYPGEITSDLGVSKIYVSQKDLIGVIPLAMEAEILNTAILTGKTVAVPVKVISVEEDGTVQGLSDSVECRSSDEDVVKVSDRCDYVFVNGKEMKGKVNVVVTVTYQHLSSPLEMTVWVPRLPLQIEVSDMELNQIKGWRVPVVSNKRPARDSEEEDDDEKRGRGCTLQYQHAMVRVLTQFVAEAPDPGGHLAHLLGSDWQVDITELITDFMQVEEPRIAKLQGGQILTGQELGMTTIQILSPLSDAILAEKTITVLDEKVTITDLGVQLVTGLSLSLQLSPGSNRAIFATAVAQELLQRPKQEAAISCWVQFSDGSVTPLDIYDEKDFSLMATSLDEKVVSILQDPKFKWPIIAAENEGQGALVKVEMLISESCQKSKRKSVLAVGTASIKVKFGQNDANPNGSESGHLGAGLHVENINDRRSKKPFQEWGSPEGPYYSSSSMGLMEGWGSTTKRPTFPKKEGQENLLDDIILSQTMATDLTSFPDQVDLPGSNVGTEEHDPDQAAKGLSDLEIGMYALLGVFCLAILVFLINCVTFALKYRHKQVPFEEQEGLSHSHDWVGLSNRTELLGNHMNFASSQEEQITAIDRGLDFEESKLLLSSNSQNSINGQLFRSTGAMLTDDKEQKSEPPTSPTSKRKRVTFSTFSAISSDDGCPSGNTMVLSNEDDIKWVCQALDPGECPEPHSCMERLHEHV.

Positions 1–30 (MCPSEMGTLWYLWSPVLISLAALFSKVTEG) are cleaved as a signal peptide. Topologically, residues 31–913 (RGILESIQRF…PDQAAKGLSD (883 aa)) are extracellular. The segment covering 233–245 (DERGDCAKEDSRK) has biased composition (basic and acidic residues). 2 disordered regions span residues 233–263 (DERG…SPPL) and 885–906 (SFPD…DPDQ). The chain crosses the membrane as a helical span at residues 914-934 (LEIGMYALLGVFCLAILVFLI). The Cytoplasmic portion of the chain corresponds to 935–1097 (NCVTFALKYR…SCMERLHEHV (163 aa)). Positions 1021-1042 (MLTDDKEQKSEPPTSPTSKRKR) are disordered.

The protein belongs to the TMEM132 family. As to expression, expressed in mature oligodendrocytes in the brain.

It is found in the membrane. Functionally, regulates neuronal morphology via inhibition of the WAVE regulatory complex (WCR), a complex that controls F-actin cytoskeletal dynamics. This Rattus norvegicus (Rat) protein is Transmembrane protein 132D (Tmem132d).